Consider the following 361-residue polypeptide: DNA replication and repair protein RecF (361 aa).

Gly30–Thr37 serves as a coordination point for ATP.

It belongs to the RecF family.

Its subcellular location is the cytoplasm. The RecF protein is involved in DNA metabolism; it is required for DNA replication and normal SOS inducibility. RecF binds preferentially to single-stranded, linear DNA. It also seems to bind ATP. The protein is DNA replication and repair protein RecF of Yersinia enterocolitica serotype O:8 / biotype 1B (strain NCTC 13174 / 8081).